The primary structure comprises 316 residues: HPr kinase/phosphorylase (316 aa).

Catalysis depends on residues His-143 and Lys-164. 158–165 contributes to the ATP binding site; sequence GEAGSGKS. Ser-165 provides a ligand contact to Mg(2+). The active-site Proton acceptor; for phosphorylation activity. Proton donor; for dephosphorylation activity is Asp-182. The important for the catalytic mechanism of both phosphorylation and dephosphorylation stretch occupies residues 206–215; that stretch reads LEVRGLGVLN. Glu-207 is a binding site for Mg(2+). The active site involves Arg-251. Residues 272–277 are important for the catalytic mechanism of dephosphorylation; sequence PVMPGR.

The protein belongs to the HPrK/P family. As to quaternary structure, homohexamer. Mg(2+) serves as cofactor.

It carries out the reaction [HPr protein]-L-serine + ATP = [HPr protein]-O-phospho-L-serine + ADP + H(+). It catalyses the reaction [HPr protein]-O-phospho-L-serine + phosphate + H(+) = [HPr protein]-L-serine + diphosphate. Functionally, catalyzes the ATP- as well as the pyrophosphate-dependent phosphorylation of a specific serine residue in HPr, a phosphocarrier protein of the phosphoenolpyruvate-dependent sugar phosphotransferase system (PTS). HprK/P also catalyzes the pyrophosphate-producing, inorganic phosphate-dependent dephosphorylation (phosphorolysis) of seryl-phosphorylated HPr (P-Ser-HPr). This chain is HPr kinase/phosphorylase, found in Xanthomonas axonopodis pv. citri (strain 306).